Reading from the N-terminus, the 1405-residue chain is DNA-directed RNA polymerase subunit beta' (1405 aa).

Zn(2+) is bound by residues Cys70, Cys72, Cys85, and Cys88. Mg(2+)-binding residues include Asp460, Asp462, and Asp464. Zn(2+) contacts are provided by Cys814, Cys888, Cys895, and Cys898.

Belongs to the RNA polymerase beta' chain family. As to quaternary structure, the RNAP catalytic core consists of 2 alpha, 1 beta, 1 beta' and 1 omega subunit. When a sigma factor is associated with the core the holoenzyme is formed, which can initiate transcription. The cofactor is Mg(2+). Zn(2+) serves as cofactor.

It carries out the reaction RNA(n) + a ribonucleoside 5'-triphosphate = RNA(n+1) + diphosphate. Its function is as follows. DNA-dependent RNA polymerase catalyzes the transcription of DNA into RNA using the four ribonucleoside triphosphates as substrates. This is DNA-directed RNA polymerase subunit beta' from Wigglesworthia glossinidia brevipalpis.